A 67-amino-acid chain; its full sequence is Conotoxin AbVIM (67 aa).

An N-terminal signal peptide occupies residues 1-17; sequence VLIIAVLFLTACQLIAT. The propeptide occupies 18 to 40; that stretch reads ASYARSERKHPDLRLSSRNSKLS. 3 cysteine pairs are disulfide-bonded: C43-C57, C50-C61, and C56-C66.

It belongs to the conotoxin O1 superfamily. Expressed by the venom duct.

The protein resides in the secreted. This is Conotoxin AbVIM from Conus abbreviatus (Abbreviated cone).